A 49-amino-acid polypeptide reads, in one-letter code: KGGYPVDSKGCKISCVINNEYCSRDCTSGYCYFLRWGLACWCDGVPPQR.

3 cysteine pairs are disulfide-bonded: Cys-15–Cys-31, Cys-22–Cys-40, and Cys-26–Cys-42.

The protein belongs to the long (4 C-C) scorpion toxin superfamily. Sodium channel inhibitor family. Beta subfamily. As to expression, expressed by the venom gland.

It localises to the secreted. In terms of biological role, beta toxins bind voltage-independently at site-4 of sodium channels (Nav) and shift the voltage of activation toward more negative potentials thereby affecting sodium channel activation and promoting spontaneous and repetitive firing. This toxin acts on X.laevis Nav1.6/SCN8A and insect BgNav1 channels, and also displays a small but significant effect on X.laevis Nav1.4/SCN4A channels. In mice induces nociception (licking and lifting behaviors) during the first 15 minutes after injection, and increases the release of TNF-alpha in J774.1 cells. The protein is Beta-toxin Rc1 of Rhopalurus crassicauda (Scorpion).